We begin with the raw amino-acid sequence, 177 residues long: Early nodulin-like protein 6 (177 aa).

Positions 1-23 (MGGQKIVLLSIFVCFYVFSLVSC) are cleaved as a signal peptide. One can recognise a Phytocyanin domain in the interval 24–127 (TEFEAGGENG…GQKMIIKVME (104 aa)). Residue Asn-41 is glycosylated (N-linked (GlcNAc...) asparagine). Residues Cys-81 and Cys-115 are joined by a disulfide bond. Asn-149 carries the GPI-anchor amidated asparagine lipid modification. A propeptide spans 150–177 (HAVRKTSRFLGAGLVTISILVITVFSLV) (removed in mature form).

This sequence belongs to the early nodulin-like (ENODL) family. Confined to flowers.

The protein resides in the cell membrane. Functionally, may act as a carbohydrate transporter. This is Early nodulin-like protein 6 from Arabidopsis thaliana (Mouse-ear cress).